Here is a 398-residue protein sequence, read N- to C-terminus: Succinate--CoA ligase [ADP-forming] subunit beta (398 aa).

The 246-residue stretch at 9-254 folds into the ATP-grasp domain; the sequence is KAVLREFGVP…ETEEDAKEIE (246 aa). ATP contacts are provided by residues lysine 46, 53–55, glutamate 109, serine 112, and glutamate 117; that span reads GRG. 2 residues coordinate Mg(2+): asparagine 209 and aspartate 223. Substrate is bound by residues asparagine 274 and 331–333; that span reads GIM.

It belongs to the succinate/malate CoA ligase beta subunit family. In terms of assembly, heterotetramer of two alpha and two beta subunits. The cofactor is Mg(2+).

The catalysed reaction is succinate + ATP + CoA = succinyl-CoA + ADP + phosphate. The enzyme catalyses GTP + succinate + CoA = succinyl-CoA + GDP + phosphate. It participates in carbohydrate metabolism; tricarboxylic acid cycle; succinate from succinyl-CoA (ligase route): step 1/1. Functionally, succinyl-CoA synthetase functions in the citric acid cycle (TCA), coupling the hydrolysis of succinyl-CoA to the synthesis of either ATP or GTP and thus represents the only step of substrate-level phosphorylation in the TCA. The beta subunit provides nucleotide specificity of the enzyme and binds the substrate succinate, while the binding sites for coenzyme A and phosphate are found in the alpha subunit. The polypeptide is Succinate--CoA ligase [ADP-forming] subunit beta (Rhodopseudomonas palustris (strain ATCC BAA-98 / CGA009)).